A 629-amino-acid chain; its full sequence is tRNA uridine 5-carboxymethylaminomethyl modification enzyme MnmG (629 aa).

FAD contacts are provided by residues 13–18 (GGGHAG), valine 125, and serine 180. 273-287 (GPRYCPSIEDKVMRF) provides a ligand contact to NAD(+). Glutamine 370 contributes to the FAD binding site.

It belongs to the MnmG family. Homodimer. Heterotetramer of two MnmE and two MnmG subunits. FAD is required as a cofactor.

It localises to the cytoplasm. Its function is as follows. NAD-binding protein involved in the addition of a carboxymethylaminomethyl (cmnm) group at the wobble position (U34) of certain tRNAs, forming tRNA-cmnm(5)s(2)U34. This is tRNA uridine 5-carboxymethylaminomethyl modification enzyme MnmG from Cronobacter sakazakii (strain ATCC BAA-894) (Enterobacter sakazakii).